A 203-amino-acid polypeptide reads, in one-letter code: Outer-membrane lipoprotein LolB (203 aa).

A signal peptide spans 1–22 (MPVNLNHTLLLCLLVAASLLSG). A lipid anchor (N-palmitoyl cysteine) is attached at Cys-23. Cys-23 carries the S-diacylglycerol cysteine lipid modification.

The protein belongs to the LolB family. As to quaternary structure, monomer.

Its subcellular location is the cell outer membrane. In terms of biological role, plays a critical role in the incorporation of lipoproteins in the outer membrane after they are released by the LolA protein. This is Outer-membrane lipoprotein LolB from Shewanella denitrificans (strain OS217 / ATCC BAA-1090 / DSM 15013).